Consider the following 180-residue polypeptide: Nucleoside triphosphate/diphosphate phosphatase (180 aa).

Arg-26 (proton donor) is an active-site residue. Residues Asn-90, Asp-106, Asp-108, Asp-110, Asp-123, and Glu-126 each contribute to the Mg(2+) site.

The protein belongs to the Ntdp family. Requires Mg(2+) as cofactor.

The catalysed reaction is a ribonucleoside 5'-triphosphate + H2O = a ribonucleoside 5'-diphosphate + phosphate + H(+). The enzyme catalyses a ribonucleoside 5'-diphosphate + H2O = a ribonucleoside 5'-phosphate + phosphate + H(+). Has nucleoside phosphatase activity towards nucleoside triphosphates and nucleoside diphosphates. This Staphylococcus saprophyticus subsp. saprophyticus (strain ATCC 15305 / DSM 20229 / NCIMB 8711 / NCTC 7292 / S-41) protein is Nucleoside triphosphate/diphosphate phosphatase.